We begin with the raw amino-acid sequence, 349 residues long: Protein Wnt-7b (349 aa).

Residues Met1–Gly24 form the signal peptide. Intrachain disulfides connect Cys73/Cys84, Cys123/Cys131, Cys133/Cys152, Cys200/Cys214, and Cys202/Cys209. N-linked (GlcNAc...) asparagine glycans are attached at residues Asn83 and Asn127. A lipid anchor (O-palmitoleoyl serine; by PORCN) is attached at Ser206. The disordered linker stretch occupies residues Val238–Thr266. 6 cysteine pairs are disulfide-bonded: Cys278/Cys309, Cys294/Cys304, Cys308/Cys348, Cys324/Cys339, Cys326/Cys336, and Cys331/Cys332. Asn295 is a glycosylation site (N-linked (GlcNAc...) asparagine).

It belongs to the Wnt family. In terms of assembly, forms a soluble 1:1 complex with AFM; this prevents oligomerization and is required for prolonged biological activity. The complex with AFM may represent the physiological form in body fluids. Interacts with FZD1 and FZD10. Interacts with FZD4 (in vitro). Interacts with PORCN. Interacts with glypican GPC3. Interacts (via intrinsically disordered linker region) with RECK; interaction with RECK confers ligand selectivity for Wnt7 in brain endothelial cells and allows these cells to selectively respond to Wnt7. In terms of processing, palmitoleoylation is required for efficient binding to frizzled receptors. Depalmitoleoylation leads to Wnt signaling pathway inhibition. In terms of tissue distribution, moderately expressed in fetal brain, weakly expressed in fetal lung and kidney, and faintly expressed in adult brain, lung and prostate.

Its subcellular location is the secreted. The protein localises to the extracellular space. It localises to the extracellular matrix. Ligand for members of the frizzled family of seven transmembrane receptors that functions in the canonical Wnt/beta-catenin signaling pathway. Required for normal fusion of the chorion and the allantois during placenta development. Required for central nervous system (CNS) angiogenesis and blood-brain barrier regulation. This is Protein Wnt-7b (WNT7B) from Homo sapiens (Human).